A 1224-amino-acid polypeptide reads, in one-letter code: Potassium channel subfamily T member 1 (1224 aa).

Residues M1–L37 are disordered. The Cytoplasmic segment spans residues M1–S79. A compositionally biased stretch (low complexity) spans G13–P27. Residues L80 to C112 traverse the membrane as a helical segment. The Extracellular portion of the chain corresponds to W113–R139. Residues N119 and N123 are each glycosylated (N-linked (GlcNAc...) asparagine). A helical transmembrane segment spans residues K140–L164. The Cytoplasmic segment spans residues S165–S178. A helical membrane pass occupies residues F179–F194. At W195–L201 the chain is on the extracellular side. The helical transmembrane segment at F202 to M219 threads the bilayer. Over I220–S232 the chain is Cytoplasmic. Residues A233 to E260 form a helical membrane-spanning segment. The Extracellular segment spans residues R261–N267. The pore-forming intramembrane region spans L268–T288. Positions 282 and 283 each coordinate K(+). Residues P289 to K290 lie on the Extracellular side of the membrane. Residues I291–Q324 form a helical membrane-spanning segment. The Cytoplasmic portion of the chain corresponds to K325–L1224. The RCK N-terminal 1 domain occupies E338–V474. Na(+) contacts are provided by L499, H502, S524, and N526. The segment at Q644 to P675 is disordered. The span at T663 to R673 shows a compositional bias: polar residues. The Zn(2+) site is built by C744 and C745. Residues R747 and K750 each contribute to the K(+) site. Residues R747 and K750 each coordinate Na(+). C752 and H754 together coordinate Zn(2+). Positions 755, 757, 763, and 764 each coordinate K(+). Y757 contributes to the Na(+) binding site. F765 is a binding site for Na(+). In terms of domain architecture, RCK N-terminal 2 spans N767–L907. Residues S773, L804, D806, G828, and D851 each contribute to the K(+) site. 2 disordered regions span residues R1038–V1066 and S1198–L1224. 2 stretches are compositionally biased toward low complexity: residues G1045–T1055 and S1198–N1215.

Belongs to the potassium channel family. Calcium-activated (TC 1.A.1.3) subfamily. KCa4.1/KCNT1 sub-subfamily. In terms of assembly, homotetramer; which constitutes the Na(+)-activated K(+) channel. Interacts with KCNT2; these heterodimer channels differ from the homomers in their unitary conductance, kinetic behavior, subcellular localization, and response to activation of protein kinase C. Interacts (via C-terminus) with FMR1; this interaction alters gating properties of KCNT1. Interacts with CRBN via its cytoplasmic C-terminus. Phosphorylated by protein kinase C. Phosphorylation of the C-terminal domain increases channel activity. In terms of tissue distribution, enriched in the brainstem and olfactory bulb and detected at significant levels in four different brain regions.

Its subcellular location is the cell membrane. The catalysed reaction is K(+)(in) = K(+)(out). Activated by high intracellular Na(+). In addition to activation by Na(+), is cooperatively activated by intracellular Cl(-) levels. Inhibited by Zn(2+). Activated upon stimulation of G-protein coupled receptors, such as CHRM1 and GRIA1. Its function is as follows. Sodium-activated K(+) channel. Acts as an important mediator of neuronal membrane excitability. Contributes to the delayed outward currents. Regulates neuronal bursting in sensory neurons. Contributes to synaptic development and plasticity. In Mus musculus (Mouse), this protein is Potassium channel subfamily T member 1 (Kcnt1).